The chain runs to 423 residues: Acetylornithine aminotransferase, mitochondrial (423 aa).

Position 276 is an N6-(pyridoxal phosphate)lysine (K276).

It belongs to the class-III pyridoxal-phosphate-dependent aminotransferase family. The cofactor is pyridoxal 5'-phosphate.

The protein resides in the mitochondrion matrix. The catalysed reaction is N(2)-acetyl-L-ornithine + 2-oxoglutarate = N-acetyl-L-glutamate 5-semialdehyde + L-glutamate. It participates in amino-acid biosynthesis; L-arginine biosynthesis; N(2)-acetyl-L-ornithine from L-glutamate: step 4/4. This is Acetylornithine aminotransferase, mitochondrial (ARG8) from Eremothecium gossypii (strain ATCC 10895 / CBS 109.51 / FGSC 9923 / NRRL Y-1056) (Yeast).